The chain runs to 302 residues: 33 kDa chaperonin (302 aa).

Disulfide bonds link cysteine 234–cysteine 236 and cysteine 267–cysteine 270.

Belongs to the HSP33 family. Post-translationally, under oxidizing conditions two disulfide bonds are formed involving the reactive cysteines. Under reducing conditions zinc is bound to the reactive cysteines and the protein is inactive.

It is found in the cytoplasm. Functionally, redox regulated molecular chaperone. Protects both thermally unfolding and oxidatively damaged proteins from irreversible aggregation. Plays an important role in the bacterial defense system toward oxidative stress. This chain is 33 kDa chaperonin, found in Neisseria meningitidis serogroup B (strain ATCC BAA-335 / MC58).